The following is a 216-amino-acid chain: Pyrophosphatase PpaX (216 aa).

Aspartate 9 serves as the catalytic Nucleophile.

The protein belongs to the HAD-like hydrolase superfamily. PpaX family. The cofactor is Mg(2+).

It carries out the reaction diphosphate + H2O = 2 phosphate + H(+). Functionally, hydrolyzes pyrophosphate formed during P-Ser-HPr dephosphorylation by HPrK/P. Might play a role in controlling the intracellular pyrophosphate pool. In Bacillus cereus (strain AH820), this protein is Pyrophosphatase PpaX.